Reading from the N-terminus, the 243-residue chain is UDP-2,3-diacylglucosamine hydrolase (243 aa).

Mn(2+)-binding residues include D8, H10, D41, N79, and H114. 79-80 contributes to the substrate binding site; it reads NR. D122, K164, K167, and H195 together coordinate substrate. H195 and H197 together coordinate Mn(2+).

This sequence belongs to the LpxH family. Mn(2+) serves as cofactor.

It is found in the cell inner membrane. It carries out the reaction UDP-2-N,3-O-bis[(3R)-3-hydroxytetradecanoyl]-alpha-D-glucosamine + H2O = 2-N,3-O-bis[(3R)-3-hydroxytetradecanoyl]-alpha-D-glucosaminyl 1-phosphate + UMP + 2 H(+). It functions in the pathway glycolipid biosynthesis; lipid IV(A) biosynthesis; lipid IV(A) from (3R)-3-hydroxytetradecanoyl-[acyl-carrier-protein] and UDP-N-acetyl-alpha-D-glucosamine: step 4/6. Its function is as follows. Hydrolyzes the pyrophosphate bond of UDP-2,3-diacylglucosamine to yield 2,3-diacylglucosamine 1-phosphate (lipid X) and UMP by catalyzing the attack of water at the alpha-P atom. Involved in the biosynthesis of lipid A, a phosphorylated glycolipid that anchors the lipopolysaccharide to the outer membrane of the cell. The sequence is that of UDP-2,3-diacylglucosamine hydrolase from Vibrio vulnificus (strain YJ016).